The chain runs to 185 residues: Ribosome-recycling factor (185 aa).

The protein belongs to the RRF family.

Its subcellular location is the cytoplasm. Functionally, responsible for the release of ribosomes from messenger RNA at the termination of protein biosynthesis. May increase the efficiency of translation by recycling ribosomes from one round of translation to another. The protein is Ribosome-recycling factor of Tolumonas auensis (strain DSM 9187 / NBRC 110442 / TA 4).